The following is a 3225-amino-acid chain: MLEGLVAGLLNRFLGMYVKNFDPKQLKWEVWNGKVRLDNLELQREALDQLKLPINVIKGHLGHLVLHIPWKTLASEQVKINIEDVFLLASPKEEAEYDEDEEARRRHRLKMEKLDSAELLKERSQEGLSEEEQKRTQTFAQALVTKIVDNLQITIRNIHIRYEDAISAPGHPFALGITLEEFSAVSTDSDWTPAFITSIQSAHKLATLESLAIYWDTDAKLIGPGREPHEHSDQIPHDEMLKFFREMIAKGEADLSSEHQFILKPVSGQAKIEIDKTGSHTVPRYKANLLFDEIGVVLDDQQYRDALMMVDLFHYFIRHQEYKKFQPKGVTPKEDPRAWFRFAGNAVLSKIHERNRRWSWDYFRERRDDRRRYIELFKKTKQNIQLTPEEREDLDKLEWKLSYEDLRFWRSLARNQLKKENAEALKNKPPPQPQQQQGWLSWVWGSKPVQPQQEEQQGDENTRITEAQRKELYEVIQWDEKAALAAEIDVPRDSVRLLIETSLSTGSFTLRQNPHGDARDLISLHFDLFRAKGLTRPDSFLIDISLGGFRVNDNTTPDSLYKEIVRVKDAPNTEGQKRYSIADLELTVDEEAFFELQVEQHPLDGQGDVAVTMKLKPLEIIWNPNVVVGIADFFRPPERHMESINALLETANATVEGLRAQTRAGLQFALEEHKTVNAKLDLQAPLIILPESITTPNSTCLIVDAGHISVNSELVDKETMKQVQSTQDRPCTEEDLRRLEELMYDRFLVKLTSTQVLIGPSVEITKQQLVQRDEKRQLHIVDQINLDFVVAMSILPKAPNLTKLKISGHLPVLQVNASDSKYKHLMRIIEVAIPKLYDVEPVLAPSGSHPTIRPRLASDASTRSRRASFRKASTQFLQFVSQQQEIVLDESDSDDDSEKFEDAKDTSVDEQLRIQQRIFDFKFTVDQLRGSLYRSDPEGKHPDQLLVELVAENFGVEYHLRPYDMSAMVSLGSVTMDDFVENPPAEFKSIVSSGDIEDRKQARDLVRVKFVRVKKESPEFMSVYDGIETNVDVAISTINLVVTRKTLLTLLDFILVTFSNPQPAAPVATRMAVTDQESETNIIVQPPPIESGPIRVKVDLKSIRMILNNDGIRLATLSFNHADVGVYILGRYMRVSAKLGDLSLVDDVNLGVSEDSSLRQLVTIQGNELADFRYEYFDPDKPEKNPGYDSSIYLRAGSVKVNFIEEPFRKIVDFLVKFGKMQAIYNAARMAAANQAQQLQQSQSRIKFDIVVKTPIVVFPRVVMSPKPKRDVITAYLGEIYAQNAFVPLDDSEKADMAMKLTTGIRNIRLTSHFHYSEGRDEVLELIDHVDLGFTIIYAEHKEGIKRPDLEIEGSMSDFNLRITPYQLSALLAISQSVPTVFAADVEQHTADAERDVDVATLERARTMPSYSGASEEKVIDMAPELGTHGEAWTKLDLVFTVNTIGLELINAEEDYPVGDLEAASLSRFSLNSSRLKTRMDSNGSLEAEFVIQAFTIYDTRHRETNKFRRIMTSGNSNVDQLMASITMTGGKDRNIIAMVAIDSPRFIFALDYLFAIQKFITIGTTLPEAPIPEKSPMETPEETSDADSVRVGSSGRHSESSAGSGQQLVPVGSQQQQPVLAASEQATTSIAFRVNIVDAQVILIANPLSSSSEAMVLGTKQVVLSQQHSLTFQISECGMFLCRMDRFDDSRLRIIDDFSVKVAVDMSKPNITQVHADIEPLILRLSLRDILLVMQTIAKASELSGGTPSETASKTVAERKAQQLRAAGLKHRTASGKGTSTLATRTRHASQSAASHSGKTTTLVMQEVAKQTQRFEELILTVEGTRMVLLGDVHELPIIDMSVKTFTIHAENWTSNLKAETAFDMYMNVYNFAKSAWEPLIEPWQVGFGITREAKTGVLSVDVTSKKTFDVTITAATIALLSQSFAFFSKEQDVLTKPRGVEAPYRIRNYTGFDVIISTKRQIPGASPTTEQQLPTMTLRLEDGQEAPWSFEEWEKMRESLMTESSTANSISVQLVGSGFQEVKSIRLTREGEFLFGLKPKTQQVLHKLLVEIKLGKDNIKYVTLRSPLLVENDTGIVVELGVYDAHEGHLLKIERINPGESKPAPVGAAYFKSLLVRPDPGFKYGWSSDTLWWRDLLKRPTKTLVCKSEQYGGEVFYFRLHARWDQANPLTRNYPYMRLKLTAPLTIENLLPYDFKYKIYDRVNKQEWNNFLRKGGSIPVHMVDLSHTFLLGIEMQDTPFQASEFVVINTGNADDFKKDSHLVVKDNAGMPLNLRLHYFRIPDGGGSFKVTVYSPYVILNKTGLDVSVRSKGFMQSARAAAGQTLIDVGGDGQKKARPLMFSFHNDDHRNRALLKAGDSEWSKPQSFDAIGSTTEVVLQTANRNAEIHLGVTVDSGQGKYKMVKVVTLAPRYVIHNKLGEDINIREPSSSFWIPLKHGAHRPLHWLQRGAVKQLCLCYPGVDNQWTAPFNISDLGITHLKIARAGQRQRLIRVEILMEDATIFLNLSMEQRNWPFSMRNESDTEFTFYQVNPTIEEDASEDRSGWRPVRYRLPPRSIMPYAWDFPAAKHKEICICAYNKERHVKLQEIGNLMPMKLALPNGESKTIDINVTADGPTQTLILSNYRQSKSLYRQRSNAGSISGREGFEAKEFDTGTTFRATLRLSGIGVSIINTQLKELAYITLRDVQLRYSDSALYQTFSLAVKWIQIDNQLYGGIFPMILYPSVVPKRAQEIDAHPSLHAMVTRVKDESYGVEYIKYATVLLQEMTVELDEDFIYAVLEFSKIPGASWESTQEEDRLCDDSVDVPQPKQQQAGRDIYFEVLNIQPMQLDLSFVRTERVNVEDKTSSRNPVMFFFNVMTMAIGNINDAPVRFNALMLENVRVSIPVLIQNISNHYSQEALYQIHKILGSADFLGNPVGLFNNISSGFADIFYEPYQGLIMSDRPEDFGLGLARGAGSFFKKSVYGFTDSFSKVTGSFAKGLAAATMDKQFQDRRRITRARNRPKHALFGVTAGANSLISSVASGVGGLARKPLEGAEQEGALGFFKGIGKGVVGLATKPAIGVLDFASNISEGVRNTTTVFSSSEASELDRVRLPRHIAADGIVRPYSQREALGQSWLKQVDNGKYFDEAYIGHLELPTEDMVVMVTYARILLIRSRRLQTEWDVPLKDVQTIAKERTGLSLTLRGGTNGPFIPVAQESGRAFLYRMVAVAVEEFNRRFRGLE.

The segment at 1–1390 is involved in phospholipid binding; that stretch reads MLEGLVAGLL…VFAADVEQHT (1390 aa). Residues 2–115 enclose the Chorein N-terminal domain; it reads LEGLVAGLLN…RHRLKMEKLD (114 aa). Disordered stretches follow at residues 1568-1610 and 1768-1799; these read PEAP…QQLV and AGLK…SHSG. Low complexity predominate over residues 1590–1610; the sequence is VRVGSSGRHSESSAGSGQQLV. The segment covering 1777–1799 has biased composition (polar residues); the sequence is GKGTSTLATRTRHASQSAASHSG. Residues 2290–2570 enclose the SHR-BD domain; that stretch reads FKVTVYSPYV…PYAWDFPAAK (281 aa).

The protein belongs to the VPS13 family.

Its subcellular location is the membrane. In terms of biological role, mediates the transfer of lipids between membranes at organelle contact sites. Binds phospholipids, including phosphatidylcholine (PC), phosphatidylethanolamine (PE), phosphatidic acid (PA), and phosphatidylserine (PS). May play a role in mitochondrial lipid homeostasis, Golgi vesicle transport, reticulophagy, actin cytoskeleton organization and formation of the prospore membrane. This is Intermembrane lipid transfer protein VPS13 from Chaetomium thermophilum (strain DSM 1495 / CBS 144.50 / IMI 039719) (Thermochaetoides thermophila).